A 393-amino-acid chain; its full sequence is Probable protein phosphatase 2C 68 (393 aa).

The 304-residue stretch at 56 to 359 (DFSIAVVQAN…DDITVVVIFI (304 aa)) folds into the PPM-type phosphatase domain. Residues aspartate 87, glycine 88, aspartate 291, and aspartate 350 each coordinate Mn(2+).

The protein belongs to the PP2C family. Mg(2+) is required as a cofactor. Mn(2+) serves as cofactor.

The enzyme catalyses O-phospho-L-seryl-[protein] + H2O = L-seryl-[protein] + phosphate. It carries out the reaction O-phospho-L-threonyl-[protein] + H2O = L-threonyl-[protein] + phosphate. Its function is as follows. May dephosphorylate and repress plasma membrane H(+)-ATPases (PM H(+)-ATPases, e.g. AHA1 and AHA2), thus influencing negatively plant growth and fitness. The sequence is that of Probable protein phosphatase 2C 68 from Arabidopsis thaliana (Mouse-ear cress).